The sequence spans 417 residues: C4-dicarboxylate transport protein (417 aa).

8 consecutive transmembrane segments (helical) span residues 4 to 26, 41 to 60, 72 to 94, 137 to 159, 180 to 202, 217 to 239, 285 to 307, and 347 to 369; these read IYVQ…PQIG, KLVI…ARMG, ALIY…GRLI, FIGA…TGFA, LFFG…AMGF, ALVA…GIAW, VVGL…YMTL, and FITL…AILV.

The protein belongs to the dicarboxylate/amino acid:cation symporter (DAACS) (TC 2.A.23) family.

The protein localises to the cell inner membrane. In terms of biological role, responsible for the transport of dicarboxylates such as succinate, fumarate, and malate from the periplasm across the membrane. In Caulobacter vibrioides (strain ATCC 19089 / CIP 103742 / CB 15) (Caulobacter crescentus), this protein is C4-dicarboxylate transport protein.